Consider the following 73-residue polypeptide: Small ribosomal subunit protein bS18c (73 aa).

This sequence belongs to the bacterial ribosomal protein bS18 family. Part of the 30S ribosomal subunit.

Its subcellular location is the plastid. The protein localises to the chloroplast. The polypeptide is Small ribosomal subunit protein bS18c (rps18) (Guillardia theta (Cryptophyte)).